The primary structure comprises 392 residues: Formate-dependent phosphoribosylglycinamide formyltransferase (392 aa).

N(1)-(5-phospho-beta-D-ribosyl)glycinamide-binding positions include Glu22–Leu23 and Glu82. ATP contacts are provided by residues Arg114, Lys155, Ser160 to Gln165, Glu195 to Val198, and Glu203. The 190-residue stretch at Arg119–Leu308 folds into the ATP-grasp domain. 2 residues coordinate Mg(2+): Glu267 and Glu279. N(1)-(5-phospho-beta-D-ribosyl)glycinamide contacts are provided by residues Asp286, Lys355, and Arg362–Arg363.

It belongs to the PurK/PurT family. In terms of assembly, homodimer.

The enzyme catalyses N(1)-(5-phospho-beta-D-ribosyl)glycinamide + formate + ATP = N(2)-formyl-N(1)-(5-phospho-beta-D-ribosyl)glycinamide + ADP + phosphate + H(+). It functions in the pathway purine metabolism; IMP biosynthesis via de novo pathway; N(2)-formyl-N(1)-(5-phospho-D-ribosyl)glycinamide from N(1)-(5-phospho-D-ribosyl)glycinamide (formate route): step 1/1. Functionally, involved in the de novo purine biosynthesis. Catalyzes the transfer of formate to 5-phospho-ribosyl-glycinamide (GAR), producing 5-phospho-ribosyl-N-formylglycinamide (FGAR). Formate is provided by PurU via hydrolysis of 10-formyl-tetrahydrofolate. In Escherichia coli O1:K1 / APEC, this protein is Formate-dependent phosphoribosylglycinamide formyltransferase.